Reading from the N-terminus, the 273-residue chain is 2-dehydro-3-deoxyphosphooctonate aldolase (273 aa).

It belongs to the KdsA family.

Its subcellular location is the cytoplasm. The catalysed reaction is D-arabinose 5-phosphate + phosphoenolpyruvate + H2O = 3-deoxy-alpha-D-manno-2-octulosonate-8-phosphate + phosphate. It functions in the pathway carbohydrate biosynthesis; 3-deoxy-D-manno-octulosonate biosynthesis; 3-deoxy-D-manno-octulosonate from D-ribulose 5-phosphate: step 2/3. The protein operates within bacterial outer membrane biogenesis; lipopolysaccharide biosynthesis. The chain is 2-dehydro-3-deoxyphosphooctonate aldolase from Cyanothece sp. (strain PCC 7425 / ATCC 29141).